The primary structure comprises 396 residues: Phosphopentomutase (396 aa).

Mn(2+) is bound by residues Asp13, Asp288, His293, Asp329, His330, and His341.

It belongs to the phosphopentomutase family. Mn(2+) serves as cofactor.

The protein localises to the cytoplasm. The enzyme catalyses 2-deoxy-alpha-D-ribose 1-phosphate = 2-deoxy-D-ribose 5-phosphate. It catalyses the reaction alpha-D-ribose 1-phosphate = D-ribose 5-phosphate. Its pathway is carbohydrate degradation; 2-deoxy-D-ribose 1-phosphate degradation; D-glyceraldehyde 3-phosphate and acetaldehyde from 2-deoxy-alpha-D-ribose 1-phosphate: step 1/2. In terms of biological role, isomerase that catalyzes the conversion of deoxy-ribose 1-phosphate (dRib-1-P) and ribose 1-phosphate (Rib-1-P) to deoxy-ribose 5-phosphate (dRib-5-P) and ribose 5-phosphate (Rib-5-P), respectively. In Clostridium perfringens (strain ATCC 13124 / DSM 756 / JCM 1290 / NCIMB 6125 / NCTC 8237 / Type A), this protein is Phosphopentomutase.